The sequence spans 405 residues: S-arrestin (405 aa).

Thr234 is modified (phosphothreonine).

Belongs to the arrestin family. As to quaternary structure, monomer. Homodimer. Homotetramer. Interacts with RHO (via the phosphorylated C-terminus).

Its subcellular location is the cell projection. The protein resides in the cilium. The protein localises to the photoreceptor outer segment. It is found in the membrane. In terms of biological role, binds to photoactivated, phosphorylated RHO and terminates RHO signaling via G-proteins by competing with G-proteins for the same binding site on RHO. May play a role in preventing light-dependent degeneration of retinal photoreceptor cells. The sequence is that of S-arrestin (SAG) from Canis lupus familiaris (Dog).